The chain runs to 204 residues: 34 kDa membrane antigen (204 aa).

An N-terminal signal peptide occupies residues 1–19 (MKRVSLLGSAAIFALVFSA). Residue Cys-20 is the site of N-palmitoyl cysteine attachment. Cys-20 carries S-diacylglycerol cysteine lipidation.

It belongs to the UPF0423 family.

It is found in the cell membrane. Functionally, this antigen is a pathogen-specific membrane immunogen. The polypeptide is 34 kDa membrane antigen (tpd) (Treponema pallidum (strain Nichols)).